The chain runs to 633 residues: Pollen receptor-like kinase 3 (633 aa).

The N-terminal stretch at 1–19 (MTAVLFLCFLLICFSFTPS) is a signal peptide. 2 N-linked (GlcNAc...) asparagine glycosylation sites follow: N22 and N37. C53 and C62 are oxidised to a cystine. LRR repeat units lie at residues 90–115 (LPNL…KLPG), 117–137 (KSLL…FFKE), 138–162 (TPQL…LMQL), 163–186 (AGLE…TDGN), and 188–210 (VLKS…ISDR). The N-linked (GlcNAc...) asparagine glycan is linked to N123. Residues C224 and C232 are joined by a disulfide bond. N-linked (GlcNAc...) asparagine glycosylation occurs at N246. Residues 249–269 (AKAIFMVILFLLIFLFVVAII) traverse the membrane as a helical segment. A compositionally biased stretch (basic and acidic residues) spans 294-314 (VEVRVPDSIKKPIDSSKKRSN). The segment at 294–339 (VEVRVPDSIKKPIDSSKKRSNAEGSSKKGSSHNGKGAGGGPGSGMG) is disordered. Positions 328–338 (KGAGGGPGSGM) are enriched in gly residues. The Protein kinase domain maps to 358–633 (KAAAEVLGNG…IVRRIERVTL (276 aa)). ATP contacts are provided by residues 364 to 372 (LGNGSLGSA) and K386. A Phosphoserine modification is found at S438. The residue at position 458 (T458) is a Phosphothreonine. Phosphoserine is present on S535.

Belongs to the protein kinase superfamily. Ser/Thr protein kinase family. In terms of assembly, interacts in vitro with ROPGEF1 (via PRONE domain). Interacts with PRK6. Expressed in pollen and/or in flowers, but not in leaves.

It localises to the membrane. It carries out the reaction L-seryl-[protein] + ATP = O-phospho-L-seryl-[protein] + ADP + H(+). It catalyses the reaction L-threonyl-[protein] + ATP = O-phospho-L-threonyl-[protein] + ADP + H(+). Its activity is regulated as follows. The phosphorylation activity is calcium-independent. Functionally, receptor-like kinase involved in the control of pollen germination and pollen tube polar growth. Can phosphorylate ROPGEF1 in vitro. The polypeptide is Pollen receptor-like kinase 3 (Arabidopsis thaliana (Mouse-ear cress)).